We begin with the raw amino-acid sequence, 417 residues long: Glutamyl-tRNA reductase (417 aa).

Substrate-binding positions include 49–52, serine 109, 114–116, and glutamine 120; these read TCNR and ESQ. Cysteine 50 (nucleophile) is an active-site residue. 189–194 is a binding site for NADP(+); it reads GLGEIG.

Belongs to the glutamyl-tRNA reductase family. As to quaternary structure, homodimer.

The enzyme catalyses (S)-4-amino-5-oxopentanoate + tRNA(Glu) + NADP(+) = L-glutamyl-tRNA(Glu) + NADPH + H(+). It functions in the pathway porphyrin-containing compound metabolism; protoporphyrin-IX biosynthesis; 5-aminolevulinate from L-glutamyl-tRNA(Glu): step 1/2. Its function is as follows. Catalyzes the NADPH-dependent reduction of glutamyl-tRNA(Glu) to glutamate 1-semialdehyde (GSA). The sequence is that of Glutamyl-tRNA reductase from Streptococcus sanguinis (strain SK36).